The sequence spans 115 residues: Large ribosomal subunit protein bL35m (115 aa).

This sequence belongs to the bacterial ribosomal protein bL35 family.

It is found in the mitochondrion. This Saccharomyces cerevisiae (strain YJM789) (Baker's yeast) protein is Large ribosomal subunit protein bL35m.